The following is a 143-amino-acid chain: Beta/delta-urticatoxin-Uf2a (143 aa).

Residues 1-18 (MGAIVLVALMALVASSSA) form the signal peptide. The propeptide occupies 19–80 (FSDIEHNIMK…MMLSGRPQPN (62 aa)). Disulfide bonds link Cys83/Cys100, Cys90/Cys105, Cys99/Cys113, Cys115/Cys129, Cys122/Cys134, and Cys128/Cys142.

Belongs to the urticatoxin-2 family. In terms of tissue distribution, expressed in trichomes, that are stiff epidermal hairs located on the surface of petioles and leaves.

It localises to the secreted. Functionally, plant defense neurotoxin that causes pain and systemic symptoms in mammals via modulation of voltage-gated sodium channels (Nav). Potent modulator of human Nav1.5/SCN5A (EC(50)=55 nM), Nav1.6/SCN8A (EC(50)=0.86 nM), and Nav1.7/SCN9A (EC(50)=208 nM), where it shifts the activation threshold to more negative potentials and delays fast inactivation. Also shifts the voltage-dependence of steady-state fast inactivation of Nav1.6/SCN8A, but not that of Nav1.5/SCN5A or Nav1.7/SCN9A. On Nav1.7/SCN9A, principally acts by binding to extracellular loops of domain IV (Nav site 3). Does not affect current response of the tetrodotoxin (TTX)-resistant Nav1.8/SCN10A sodium channel. In vivo, intraplantar injection into mice causes numerous dose-dependent, immediate, and long-lasting spontaneous pain behaviors, while no swelling is observed in the injected paw. At the highest doses tested, systemic symptoms including hypokinesia and hypersalivation are observed. This is Beta/delta-urticatoxin-Uf2a from Urtica ferox (Tree nettle).